Consider the following 330-residue polypeptide: Cathepsin K (330 aa).

The signal sequence occupies residues 1–16 (MWGLKVVLLLPVMSSA). Residues 17–115 (LYPEEILDTQ…TLYIPDWEGR (99 aa)) constitute a propeptide, activation peptide. The N-linked (GlcNAc...) asparagine glycan is linked to Asn104. Intrachain disulfides connect Cys137–Cys178, Cys171–Cys211, and Cys270–Cys319. Cys140 is a catalytic residue. Active-site residues include His277 and Asn297.

Belongs to the peptidase C1 family. In terms of tissue distribution, expressed in the thyroid epithelial cells.

Its subcellular location is the lysosome. The protein resides in the secreted. The protein localises to the apical cell membrane. It carries out the reaction Broad proteolytic activity. With small-molecule substrates and inhibitors, the major determinant of specificity is P2, which is preferably Leu, Met &gt; Phe, and not Arg.. Functionally, thiol protease involved in osteoclastic bone resorption and may participate partially in the disorder of bone remodeling. Displays potent endoprotease activity against fibrinogen at acid pH. May play an important role in extracellular matrix degradation. Involved in the release of thyroid hormone thyroxine (T4) by limited proteolysis of TG/thyroglobulin in the thyroid follicle lumen. In Sus scrofa (Pig), this protein is Cathepsin K (CTSK).